The sequence spans 311 residues: Progestin and adipoQ receptor family member 3 (311 aa).

Residues 1-20 (MHQKLLKSAHYIELGSYQYW) form a required for interaction with SREBF2 region. The Cytoplasmic portion of the chain corresponds to 1–73 (MHQKLLKSAH…FILSNETVNI (73 aa)). A required for interaction with SCAP region spans residues 41–60 (KDNPYITDGYRAYLPSRLCI). The golgi targeting stretch occupies residues 61 to 71 (KSLFILSNETV). Residues 74 to 96 (WSHLLGFFLFFTLGIYDMTSVLP) form a helical membrane-spanning segment. The Lumenal segment spans residues 97 to 105 (SASASREDF). A helical membrane pass occupies residues 106 to 128 (VICSICLFCFQVCMLCSVGYHLF). Over 129-140 (SCHRSEKTCRRW) the chain is Cytoplasmic. The helical transmembrane segment at 141–163 (MALDYAGISIGILGCYVSGVFYA) threads the bilayer. The Lumenal portion of the chain corresponds to 164–172 (FYCNNYWRQ). The chain crosses the membrane as a helical span at residues 173-195 (VYLITVLAMILAVFFAQIHPNYL). Over 196 to 201 (TQQWQR) the chain is Cytoplasmic. The helical transmembrane segment at 202–224 (LRSIIFCSVSGYGVIPTLHWVWL) threads the bilayer. The Lumenal portion of the chain corresponds to 225–238 (NGGIGAPIVQDFAP). A helical transmembrane segment spans residues 239–256 (RVIVMYMIALLAFLFYIS). Topologically, residues 257–275 (KVPERYFPGQLNYLGSSHQ) are cytoplasmic. A helical membrane pass occupies residues 276–298 (IWHILAVVMLYWWHQSTVYVMQY). The tract at residues 299-303 (RHSKP) is golgi targeting. Residues 299–311 (RHSKPCPDYVSHL) lie on the Lumenal side of the membrane.

The protein belongs to the ADIPOR family. In terms of assembly, interacts with SCAP and SREBF2; the interactions are direct, increase in low cholesterol conditions and tether SCAP:SREBP complex to the Golgi apparatus. Interaction with SCAP is mutually exclusive with INSIG1. In hepatocytes, interacts with PPARA and HUWE1; the interactions promote PPARA poylubiquitination and HUWE1-mediated degradation. In macrophages, interacts with PPARG and STUB1; the interactions promote PPARG poylubiquitination and STUB1-mediated degradation. In terms of tissue distribution, widely expressed in a range of tissues.

It is found in the golgi apparatus membrane. Functionally, golgi-scaffold protein which modulates its interactors acitivies by anchoring them to the Golgi apparatus. Functions as a spatial regulator of RAF1 kinase by sequestrating it to the Golgi apparatus. Acts as a positive regulator of cholesterol biosynthesis by mediating the anchoring of the SCAP:SREBP complex in the Golgi apparatus, thereby promoting SCAP:SREBF2 complex formation, potentiating SREBF2 and SREBF1 processing and enhancing lipid synthesis. Also regulates PPARA and PPARG functions by mediating their interaction with E3 ubiquitin ligases, such as STUB1 or HUWE1, leading to their polyubiquitination and proteasome-mediated degradation. This chain is Progestin and adipoQ receptor family member 3, found in Homo sapiens (Human).